A 258-amino-acid chain; its full sequence is Alcohol dehydrogenase 2 (258 aa).

An NAD(+)-binding site is contributed by 9-33; it reads IFVGGLGFIGYEACKQLMAKNMASF. Ser-137 contributes to the substrate binding site. Tyr-150 functions as the Proton acceptor in the catalytic mechanism.

It belongs to the short-chain dehydrogenases/reductases (SDR) family. In terms of assembly, homodimer.

The enzyme catalyses a primary alcohol + NAD(+) = an aldehyde + NADH + H(+). The catalysed reaction is a secondary alcohol + NAD(+) = a ketone + NADH + H(+). The chain is Alcohol dehydrogenase 2 (ADH2) from Ceratitis rosa (Natal fruit fly).